The sequence spans 305 residues: Ribonuclease BN (305 aa).

7 residues coordinate Zn(2+): His-64, His-66, Asp-68, His-69, His-141, Asp-212, and His-270. The active-site Proton acceptor is Asp-68.

This sequence belongs to the RNase Z family. RNase BN subfamily. As to quaternary structure, homodimer. It depends on Zn(2+) as a cofactor.

Its function is as follows. Zinc phosphodiesterase, which has both exoribonuclease and endoribonuclease activities. The chain is Ribonuclease BN from Escherichia coli O127:H6 (strain E2348/69 / EPEC).